A 398-amino-acid polypeptide reads, in one-letter code: Aurofusarin biosynthesis regulatory protein aurR1 (398 aa).

The zn(2)-C6 fungal-type DNA-binding region spans 18-45 (CDNCAKSKVRCGKEQPWCQRCERRGQVC). 2 disordered regions span residues 52 to 73 (RSRK…GTPP) and 275 to 314 (AATI…SSLI). Basic and acidic residues-rich tracts occupy residues 56–67 (RTLDAAHPESDQ) and 289–298 (DGKDTERSVS). Over residues 299–311 (RDTNVSQDGSEPS) the composition is skewed to polar residues.

It localises to the nucleus. Transcription factor that specifically regulates the expression of the gene cluster that mediates the biosynthesis of aurofusarin, a red mycelium pigment which is acting as a mycotoxin. This is Aurofusarin biosynthesis regulatory protein aurR1 from Gibberella zeae (strain ATCC MYA-4620 / CBS 123657 / FGSC 9075 / NRRL 31084 / PH-1) (Wheat head blight fungus).